Reading from the N-terminus, the 180-residue chain is UPF0743 protein C215.06c (180 aa).

2 C2HC LYAR-type zinc fingers span residues methionine 1–histidine 26 and glycine 27–methionine 51. Cysteine 6, cysteine 9, histidine 21, cysteine 25, cysteine 32, cysteine 35, histidine 47, and cysteine 50 together coordinate Zn(2+). The disordered stretch occupies residues leucine 61–glutamine 125. The segment covering asparagine 77–alanine 95 has biased composition (polar residues). Serine 85 carries the post-translational modification Phosphoserine. Residues histidine 100–asparagine 111 are compositionally biased toward basic and acidic residues.

It belongs to the UPF0743 family.

Its subcellular location is the nucleus. The sequence is that of UPF0743 protein C215.06c from Schizosaccharomyces pombe (strain 972 / ATCC 24843) (Fission yeast).